A 170-amino-acid chain; its full sequence is Calcineurin subunit B type 2 (170 aa).

Residue Gly-2 is the site of N-myristoyl glycine attachment. 4 consecutive EF-hand domains span residues 18–46 (DEIK…FMSL), 50–85 (RHNP…FSVK), 87–122 (DEEQ…MVGN), and 128–163 (QLQQ…LEIH). 15 residues coordinate Ca(2+): Asp-31, Asp-33, Ser-35, Ser-37, Glu-42, Asp-63, Asp-65, Asp-67, Glu-69, Glu-74, Asp-100, Asp-102, Asp-104, Tyr-106, and Glu-111. Residues 131 to 136 (QLVDKT) form a calcineurin A binding region. 5 residues coordinate Ca(2+): Asp-141, Asp-143, Asp-145, Lys-147, and Glu-152.

Belongs to the calcineurin regulatory subunit family. In terms of assembly, forms a complex composed of a calmodulin-dependent catalytic subunit (also known as calcineurin A) and a regulatory Ca(2+)-binding subunit (also known as calcineurin B). There are three catalytic subunits, each encoded by a separate gene (PPP3CA, PPP3CB, and PPP3CC) and two regulatory subunits which are also encoded by separate genes (PPP3R1 and PPP3R2). Interacts with SPATA33 (via PQIIIT motif). As to expression, testis-specific.

It is found in the mitochondrion. Functionally, regulatory subunit of calcineurin, a calcium-dependent, calmodulin stimulated protein phosphatase. Confers calcium sensitivity. The polypeptide is Calcineurin subunit B type 2 (PPP3R2) (Homo sapiens (Human)).